The following is a 221-amino-acid chain: Lipoprotein-releasing system ATP-binding protein LolD (221 aa).

One can recognise an ABC transporter domain in the interval 6 to 220 (LILKNISKHY…YKLKHGLLNI (215 aa)). 42–49 (GSSGSGKS) serves as a coordination point for ATP.

The protein belongs to the ABC transporter superfamily. Lipoprotein translocase (TC 3.A.1.125) family. In terms of assembly, the complex is composed of two ATP-binding proteins (LolD) and two transmembrane proteins (LolC and LolE).

It localises to the cell inner membrane. Its function is as follows. Part of the ABC transporter complex LolCDE involved in the translocation of mature outer membrane-directed lipoproteins, from the inner membrane to the periplasmic chaperone, LolA. Responsible for the formation of the LolA-lipoprotein complex in an ATP-dependent manner. This is Lipoprotein-releasing system ATP-binding protein LolD from Rickettsia felis (strain ATCC VR-1525 / URRWXCal2) (Rickettsia azadi).